The sequence spans 591 residues: Phenylalanine--tRNA ligase beta subunit (591 aa).

The B5 domain maps to 304-380 (LSYREMTVTT…VAFGYNNLIT (77 aa)). Mg(2+)-binding residues include Asp-358, Asp-364, Glu-367, and Asp-368.

The protein belongs to the phenylalanyl-tRNA synthetase beta subunit family. Type 2 subfamily. In terms of assembly, tetramer of two alpha and two beta subunits. The cofactor is Mg(2+).

It localises to the cytoplasm. It catalyses the reaction tRNA(Phe) + L-phenylalanine + ATP = L-phenylalanyl-tRNA(Phe) + AMP + diphosphate + H(+). The protein is Phenylalanine--tRNA ligase beta subunit of Caenorhabditis elegans.